We begin with the raw amino-acid sequence, 129 residues long: Glycine cleavage system H protein (129 aa).

Residues 24–106 (IAVIGITAYA…YGDGWLIKVR (83 aa)) form the Lipoyl-binding domain. K65 carries the post-translational modification N6-lipoyllysine.

The protein belongs to the GcvH family. In terms of assembly, the glycine cleavage system is composed of four proteins: P, T, L and H. It depends on (R)-lipoate as a cofactor.

Functionally, the glycine cleavage system catalyzes the degradation of glycine. The H protein shuttles the methylamine group of glycine from the P protein to the T protein. This chain is Glycine cleavage system H protein, found in Synechococcus sp. (strain JA-3-3Ab) (Cyanobacteria bacterium Yellowstone A-Prime).